Consider the following 565-residue polypeptide: NAD-dependent malic enzyme (565 aa).

Residue Tyr-104 is the Proton donor of the active site. Arg-157 provides a ligand contact to NAD(+). Lys-175 serves as the catalytic Proton acceptor. The a divalent metal cation site is built by Glu-246, Asp-247, and Asp-270. Residues Asp-270 and Asn-418 each coordinate NAD(+).

The protein belongs to the malic enzymes family. Homotetramer. Requires Mg(2+) as cofactor. Mn(2+) serves as cofactor.

It carries out the reaction (S)-malate + NAD(+) = pyruvate + CO2 + NADH. It catalyses the reaction oxaloacetate + H(+) = pyruvate + CO2. This is NAD-dependent malic enzyme from Yersinia enterocolitica serotype O:8 / biotype 1B (strain NCTC 13174 / 8081).